Reading from the N-terminus, the 274-residue chain is Capsid protein (274 aa).

Residues 88 to 113 (RPAKQVLKGSSSKSQQRDEGEVVFTR) are disordered. The segment covering 102 to 113 (QQRDEGEVVFTR) has biased composition (basic and acidic residues).

The protein resides in the virion. Functionally, capsid protein self-assembles to form a capsid about 33 nm in diameter. The capsid encapsulates two genomic RNAs as well as a third, subgenomic RNA (RNA3) (Potential). The sequence is that of Capsid protein from Raspberry bushy dwarf virus (isolate Malling Jewel raspberry/R15) (RBDV).